The sequence spans 223 residues: Killer cell lectin-like receptor subfamily B member 1B allele C (223 aa).

Topologically, residues 1–45 (MDTAVVYADLHLARTGEPKRESPPSLSPDTCQCPRWHRLALKLGC) are cytoplasmic. Positions 5 to 10 (VVYADL) match the ITIM motif motif. Residues 31 to 34 (CQCP) carry the LCK-binding motif motif. A helical; Signal-anchor for type II membrane protein transmembrane segment spans residues 46–66 (ACFILLVLSVIGLGVLVLTLL). At 67–223 (QKPLLQNSPA…LKRESTCNDS (157 aa)) the chain is on the extracellular side. A C-type lectin domain is found at 101-211 (HRDKCFHVSQ…CDSDNIWICQ (111 aa)). 2 disulfide bridges follow: C122–C210 and C189–C202.

As to quaternary structure, homodimer; disulfide-linked. Interacts with tyrosine kinase LCK. Binds PTPN6/SHP-1 in a phosphorylation-dependent manner. Expressed in a subset of natural killer cells.

The protein localises to the membrane. Receptor for CLEC2D/OCIL. Ligand-binding contributes to inhibition of cytotoxic natural killer (NK) cells. May mediate MHC class I-independent 'missing-self' recognition of allografts, tumor cells and virus-infected cells. The chain is Killer cell lectin-like receptor subfamily B member 1B allele C from Rattus norvegicus (Rat).